Reading from the N-terminus, the 49-residue chain is Large ribosomal subunit protein bL33B (49 aa).

This sequence belongs to the bacterial ribosomal protein bL33 family.

In Bacillus licheniformis, this protein is Large ribosomal subunit protein bL33B (rpmGB).